We begin with the raw amino-acid sequence, 121 residues long: Large ribosomal subunit protein uL22 (121 aa).

It belongs to the universal ribosomal protein uL22 family. As to quaternary structure, part of the 50S ribosomal subunit.

This protein binds specifically to 23S rRNA; its binding is stimulated by other ribosomal proteins, e.g. L4, L17, and L20. It is important during the early stages of 50S assembly. It makes multiple contacts with different domains of the 23S rRNA in the assembled 50S subunit and ribosome. Its function is as follows. The globular domain of the protein is located near the polypeptide exit tunnel on the outside of the subunit, while an extended beta-hairpin is found that lines the wall of the exit tunnel in the center of the 70S ribosome. The sequence is that of Large ribosomal subunit protein uL22 from Synechococcus sp. (strain CC9902).